Reading from the N-terminus, the 278-residue chain is 4-hydroxy-tetrahydrodipicolinate reductase (278 aa).

Residues 16 to 21 (GAGGRM) and Glu42 each bind NAD(+). Arg43 contributes to the NADP(+) binding site. NAD(+)-binding positions include 106-108 (GTT) and 130-133 (AGNY). His163 acts as the Proton donor/acceptor in catalysis. Residue His164 participates in (S)-2,3,4,5-tetrahydrodipicolinate binding. Residue Lys167 is the Proton donor of the active site. (S)-2,3,4,5-tetrahydrodipicolinate is bound at residue 173 to 174 (GT).

Belongs to the DapB family.

The protein resides in the cytoplasm. It carries out the reaction (S)-2,3,4,5-tetrahydrodipicolinate + NAD(+) + H2O = (2S,4S)-4-hydroxy-2,3,4,5-tetrahydrodipicolinate + NADH + H(+). It catalyses the reaction (S)-2,3,4,5-tetrahydrodipicolinate + NADP(+) + H2O = (2S,4S)-4-hydroxy-2,3,4,5-tetrahydrodipicolinate + NADPH + H(+). It functions in the pathway amino-acid biosynthesis; L-lysine biosynthesis via DAP pathway; (S)-tetrahydrodipicolinate from L-aspartate: step 4/4. Its function is as follows. Catalyzes the conversion of 4-hydroxy-tetrahydrodipicolinate (HTPA) to tetrahydrodipicolinate. The chain is 4-hydroxy-tetrahydrodipicolinate reductase from Psychrobacter arcticus (strain DSM 17307 / VKM B-2377 / 273-4).